A 191-amino-acid chain; its full sequence is UPF0149 protein VV2847 (191 aa).

Belongs to the UPF0149 family.

This Vibrio vulnificus (strain YJ016) protein is UPF0149 protein VV2847.